A 146-amino-acid chain; its full sequence is MRNEMHLQFSALSQNESFARVTVAAFVAQLDPTLDELTEIKTVVSEAVTNAIIHGYENDPSGVVYISVIIEGHTVHLTIRDHGKGIENVEEARQPLFTTKPELERSGMGFTIMENFMDEVNIYSKVNEGTTVELIKHLTKSKALCN.

It belongs to the anti-sigma-factor family.

The catalysed reaction is L-seryl-[protein] + ATP = O-phospho-L-seryl-[protein] + ADP + H(+). It carries out the reaction L-threonyl-[protein] + ATP = O-phospho-L-threonyl-[protein] + ADP + H(+). In terms of biological role, binds to sigma F and blocks its ability to form an RNA polymerase holoenzyme (E-sigma F). Phosphorylates SpoIIAA on a serine residue. This phosphorylation may enable SpoIIAA to act as an anti-anti-sigma factor that counteracts SpoIIAB and thus releases sigma F from inhibition. This is Anti-sigma F factor from Anoxybacillus flavithermus (strain DSM 21510 / WK1).